The chain runs to 928 residues: Isoleucine--tRNA ligase (928 aa).

The 'HIGH' region signature appears at P57 to H67. E552 is an L-isoleucyl-5'-AMP binding site. Positions K593–S597 match the 'KMSKS' region motif. K596 is an ATP binding site. The Zn(2+) site is built by C887, C890, C907, and C910.

The protein belongs to the class-I aminoacyl-tRNA synthetase family. IleS type 1 subfamily. Monomer. The cofactor is Zn(2+).

The protein resides in the cytoplasm. The enzyme catalyses tRNA(Ile) + L-isoleucine + ATP = L-isoleucyl-tRNA(Ile) + AMP + diphosphate. Catalyzes the attachment of isoleucine to tRNA(Ile). As IleRS can inadvertently accommodate and process structurally similar amino acids such as valine, to avoid such errors it has two additional distinct tRNA(Ile)-dependent editing activities. One activity is designated as 'pretransfer' editing and involves the hydrolysis of activated Val-AMP. The other activity is designated 'posttransfer' editing and involves deacylation of mischarged Val-tRNA(Ile). This chain is Isoleucine--tRNA ligase, found in Lacticaseibacillus casei (strain BL23) (Lactobacillus casei).